The sequence spans 137 residues: ATP synthase epsilon chain, chloroplastic (137 aa).

The protein belongs to the ATPase epsilon chain family. F-type ATPases have 2 components, CF(1) - the catalytic core - and CF(0) - the membrane proton channel. CF(1) has five subunits: alpha(3), beta(3), gamma(1), delta(1), epsilon(1). CF(0) has three main subunits: a, b and c.

It localises to the plastid. Its subcellular location is the chloroplast thylakoid membrane. Functionally, produces ATP from ADP in the presence of a proton gradient across the membrane. The protein is ATP synthase epsilon chain, chloroplastic of Pinus thunbergii (Japanese black pine).